The following is a 367-amino-acid chain: Ferrochelatase (367 aa).

Residues H213 and E294 each contribute to the Fe cation site.

This sequence belongs to the ferrochelatase family.

It localises to the cytoplasm. It carries out the reaction heme b + 2 H(+) = protoporphyrin IX + Fe(2+). It participates in porphyrin-containing compound metabolism; protoheme biosynthesis; protoheme from protoporphyrin-IX: step 1/1. Catalyzes the ferrous insertion into protoporphyrin IX. In Dechloromonas aromatica (strain RCB), this protein is Ferrochelatase.